The sequence spans 517 residues: Ubiquitin carboxyl-terminal hydrolase 30 (517 aa).

At 1 to 35 (MLSSRAQAARTAADKALQRFLRTGAAVRYKVMKNW) the chain is on the mitochondrial intermembrane side. Residues 36–56 (GVIGGIAAALAAGIYVIWGPI) traverse the membrane as a helical segment. The Cytoplasmic segment spans residues 57–517 (TERKKRRKGL…QQGREYRSEE (461 aa)). The 435-residue stretch at 68-502 (PGLVNLGNTC…SAYLLFYERV (435 aa)) folds into the USP domain. The active-site Nucleophile is Cys-77. Residues Lys-235 and Lys-289 each participate in a glycyl lysine isopeptide (Lys-Gly) (interchain with G-Cter in ubiquitin) cross-link. A disordered region spans residues 364 to 395 (SQHGPKATESPGSALGVQDTQAAPKPGLSQPA). Catalysis depends on His-452, which acts as the Proton acceptor.

This sequence belongs to the peptidase C19 family. Post-translationally, ubiquitinated by parkin (PRKN) at Lys-235 and Lys-289, leading to its degradation.

The protein localises to the mitochondrion outer membrane. It catalyses the reaction Thiol-dependent hydrolysis of ester, thioester, amide, peptide and isopeptide bonds formed by the C-terminal Gly of ubiquitin (a 76-residue protein attached to proteins as an intracellular targeting signal).. Its activity is regulated as follows. Inhibited by the diterpenoid derivative 15-oxospiramilactone (S3). Functionally, deubiquitinating enzyme tethered to the mitochondrial outer membrane that acts as a key inhibitor of mitophagy by counteracting the action of parkin (PRKN): hydrolyzes ubiquitin attached by parkin on target proteins, such as RHOT1/MIRO1 and TOMM20, thereby blocking parkin's ability to drive mitophagy. Preferentially cleaves 'Lys-6'- and 'Lys-11'-linked polyubiquitin chains, 2 types of linkage that participate in mitophagic signaling. Does not cleave efficiently polyubiquitin phosphorylated at 'Ser-65'. Acts as a negative regulator of mitochondrial fusion by mediating deubiquitination of MFN1 and MFN2. The chain is Ubiquitin carboxyl-terminal hydrolase 30 (Usp30) from Rattus norvegicus (Rat).